A 593-amino-acid polypeptide reads, in one-letter code: Dihydroxy-acid dehydratase (593 aa).

Over residues 1 to 17 (MSQQTEPDDDAALDGDE) the composition is skewed to acidic residues. The disordered stretch occupies residues 1-40 (MSQQTEPDDDAALDGDEPGAYGKDERLRSREVTEGPERAP). The segment covering 22–40 (GKDERLRSREVTEGPERAP) has biased composition (basic and acidic residues). [2Fe-2S] cluster is bound at residue C72. D104 is a Mg(2+) binding site. Residue C145 coordinates [2Fe-2S] cluster. Residues D146 and K147 each contribute to the Mg(2+) site. N6-carboxylysine is present on K147. Residue C217 participates in [2Fe-2S] cluster binding. E475 contacts Mg(2+). S501 acts as the Proton acceptor in catalysis.

The protein belongs to the IlvD/Edd family. As to quaternary structure, homodimer. The cofactor is [2Fe-2S] cluster. Mg(2+) is required as a cofactor.

It carries out the reaction (2R)-2,3-dihydroxy-3-methylbutanoate = 3-methyl-2-oxobutanoate + H2O. The catalysed reaction is (2R,3R)-2,3-dihydroxy-3-methylpentanoate = (S)-3-methyl-2-oxopentanoate + H2O. It functions in the pathway amino-acid biosynthesis; L-isoleucine biosynthesis; L-isoleucine from 2-oxobutanoate: step 3/4. It participates in amino-acid biosynthesis; L-valine biosynthesis; L-valine from pyruvate: step 3/4. Functionally, functions in the biosynthesis of branched-chain amino acids. Catalyzes the dehydration of (2R,3R)-2,3-dihydroxy-3-methylpentanoate (2,3-dihydroxy-3-methylvalerate) into 2-oxo-3-methylpentanoate (2-oxo-3-methylvalerate) and of (2R)-2,3-dihydroxy-3-methylbutanoate (2,3-dihydroxyisovalerate) into 2-oxo-3-methylbutanoate (2-oxoisovalerate), the penultimate precursor to L-isoleucine and L-valine, respectively. This chain is Dihydroxy-acid dehydratase, found in Natronomonas pharaonis (strain ATCC 35678 / DSM 2160 / CIP 103997 / JCM 8858 / NBRC 14720 / NCIMB 2260 / Gabara) (Halobacterium pharaonis).